The primary structure comprises 857 residues: Autoinducer 2 sensor kinase/phosphatase LuxQ (857 aa).

Transmembrane regions (helical) follow at residues 20 to 40 and 283 to 303; these read IIFL…YYFS and LGLA…RSWI. One can recognise a Histidine kinase domain in the interval 490-712; it reads KMSHEIRTPL…TFYLSIPVEK (223 aa). His493 carries the phosphohistidine; by autocatalysis modification. The Response regulatory domain maps to 735 to 850; that stretch reads KVLLVEDNHT…ELHDELLHFK (116 aa). Asp784 bears the 4-aspartylphosphate mark.

In terms of assembly, binds the complex formed by the autoinducer and LuxP.

The protein localises to the cell inner membrane. It carries out the reaction ATP + protein L-histidine = ADP + protein N-phospho-L-histidine.. In terms of biological role, at low cell density, in absence of autoinducer has a kinase activity, and autophosphorylates on a histidine residue. The phosphoryl group is then transferred to an aspartate residue in the response regulator domain. The phosphoryl group is transferred to LuxU, and ultimately to LuxO. At high cell density, in the presence of autoinducer, the kinase activity is inactivated, and the response regulator domain has a phosphatase activity. In Vibrio vulnificus (strain YJ016), this protein is Autoinducer 2 sensor kinase/phosphatase LuxQ (luxQ).